The sequence spans 297 residues: Endonuclease G, mitochondrial (297 aa).

A mitochondrion-targeting transit peptide spans 1–48 (MRALRAGLTLASGAGLGAVVEGWRRRREDARAAPGLLGRLPVLPVAAA). Thr128 bears the Phosphothreonine; by GSK3-beta mark. The active-site Proton acceptor is His141. Mg(2+) is bound at residue Asn172. The segment at 286 to 296 (AGSLKAITAGS) is essential for deoxyribonuclease activity. Ser288 bears the Phosphoserine; by GSK3-beta mark.

This sequence belongs to the DNA/RNA non-specific endonuclease family. As to quaternary structure, homodimer; disulfide-linked. Homodimerization is essential for enzyme activity. Interacts with YWHAG. Mg(2+) serves as cofactor. Post-translationally, GSK3-beta-mediated dual phosphorylations at Thr-128 and Ser-288 is necessary for its interaction with YWHAG and the induction of autophagy.

The protein localises to the mitochondrion. Functionally, endonuclease that preferentially catalyzes the cleavage of double-stranded 5-hydroxymethylcytosine (5hmC)-modified DNA. The 5hmC-modified nucleotide does not increase the binding affinity, but instead increases the efficiency of cutting and specifies the site of cleavage for the modified DNAs. Shows significantly higher affinity for four-stranded Holliday junction over duplex and single-stranded DNAs. Promotes conservative recombination when the DNA is 5hmC-modified. Promotes autophagy through the suppression of mTOR by its phosphorylation-mediated interaction with YWHAG and its endonuclease activity-mediated DNA damage response. GSK3-beta mediated phosphorylation of ENDOG enhances its interaction with YWHAG, leading to the release of TSC2 and PIK3C3 from YWHAG resulting in mTOR pathway suppression and autophagy initiation. Promotes cleavage of mtDNA in response to oxidative and nitrosative stress, in turn inducing compensatory mtDNA replication. The polypeptide is Endonuclease G, mitochondrial (ENDOG) (Homo sapiens (Human)).